Consider the following 159-residue polypeptide: Protein-export protein SecB (159 aa).

The protein belongs to the SecB family. In terms of assembly, homotetramer, a dimer of dimers. One homotetramer interacts with 1 SecA dimer.

Its subcellular location is the cytoplasm. Its function is as follows. One of the proteins required for the normal export of preproteins out of the cell cytoplasm. It is a molecular chaperone that binds to a subset of precursor proteins, maintaining them in a translocation-competent state. It also specifically binds to its receptor SecA. The sequence is that of Protein-export protein SecB from Aromatoleum aromaticum (strain DSM 19018 / LMG 30748 / EbN1) (Azoarcus sp. (strain EbN1)).